Consider the following 230-residue polypeptide: Mitochondrial fission factor homolog B (230 aa).

Residues 1 to 210 (MSGAAFPSPT…ENKERAKREM (210 aa)) lie on the Cytoplasmic side of the membrane. Residues 117–153 (EQTSSVSHPSEEVRTQTKTRRERSVSENAGVHHNGPL) form a disordered region. Ser-142 is modified (phosphoserine). Residues 179 to 210 (VDATSLRRQIVKLNRRLQLLEEENKERAKREM) are a coiled coil. Residues 211–228 (VMYSITVAFWLVNSWVWF) traverse the membrane as a helical; Anchor for type IV membrane protein segment. Over 229 to 230 (RR) the chain is Extracellular.

The protein belongs to the Tango11 family.

The protein localises to the mitochondrion outer membrane. The protein resides in the peroxisome. Plays a role in mitochondrial and peroxisomal fission. Promotes the recruitment and association of the fission mediator dynamin-related protein 1 (DNM1L) to the mitochondrial surface. The protein is Mitochondrial fission factor homolog B of Danio rerio (Zebrafish).